A 296-amino-acid polypeptide reads, in one-letter code: Transcription factor bHLH99 (296 aa).

Residues 99-150 (NQRMNHIAVERNRRKQMNHFLSILKSMMPLSYSQPNDQASIIEGTISYLKKL) enclose the bHLH domain.

In terms of assembly, homodimer. In terms of tissue distribution, expressed constitutively in roots, stems, and flowers.

The protein resides in the nucleus. The chain is Transcription factor bHLH99 (BHLH99) from Arabidopsis thaliana (Mouse-ear cress).